The sequence spans 851 residues: Protein NUD1 (851 aa).

Disordered stretches follow at residues Met-1–Ser-31 and Leu-216–Ser-352. Positions Ala-8 to Ser-21 are enriched in polar residues. Low complexity-rich tracts occupy residues Asn-223–Lys-246 and Ser-260–Ser-278. The segment covering Asn-291–His-304 has biased composition (polar residues). Residues Ser-320–Ser-333 are compositionally biased toward low complexity. A Glycyl lysine isopeptide (Lys-Gly) (interchain with G-Cter in ubiquitin) cross-link involves residue Lys-357. Phosphothreonine is present on residues Thr-388 and Thr-392. Ser-417 and Ser-419 each carry phosphoserine. LRR repeat units lie at residues Asp-544 to His-566, His-567 to Arg-588, Met-589 to Ile-609, Thr-621 to Pro-642, and Arg-643 to Glu-664.

As to quaternary structure, interacts directly with MPC54, CNM67, SPO21/MPC70, ADY3 and ADY4. Probable component of a spindle pole boby (SPB) complex composed of ADY3, SSP1, DON1, MPC54, SPO21/MPC70, NUD1 and CNM67. In terms of processing, phosphorylated from S/G2 phase until the end of mitosis.

The protein localises to the cytoplasm. Its subcellular location is the cytoskeleton. The protein resides in the microtubule organizing center. It is found in the spindle pole body. It localises to the nucleus envelope. Its function is as follows. Involved in astral microtubule organization by binding SCP72 to the outer plaque in a cell-cycle dependent manner. Required for the mitotic exit by facilitating the binding of TEMP1 to CDC15. Also involved in the pathway that organizes the shaping and sizing of the prospore membrane (PSM) during sporulation. This is Protein NUD1 (NUD1) from Saccharomyces cerevisiae (strain ATCC 204508 / S288c) (Baker's yeast).